Consider the following 104-residue polypeptide: Secreted RxLR effector protein 54 (104 aa).

Residues 1–19 (MIFTLLGLALVATKSACIA) form the signal peptide. A RxLR motif is present at residues 52–55 (RSLR). Residue Asn-64 is glycosylated (N-linked (GlcNAc...) asparagine).

It belongs to the RxLR effector family.

It localises to the secreted. Its subcellular location is the host chloroplast envelope. The protein resides in the host mitochondrion. It is found in the host nucleus. The protein localises to the host cytoplasm. Functionally, secreted effector that completely suppresses the host cell death induced by cell death-inducing proteins. The protein is Secreted RxLR effector protein 54 of Plasmopara viticola (Downy mildew of grapevine).